Reading from the N-terminus, the 628-residue chain is MSEKKYTFETEVDKLLHLVIHSLYSNREIFLRELVSNSSDAIEKLRYESISNAALNEDDTDYAIRIDFDKDAKTITVSDNGIGMTEEEVIENLGTIAKSGTKKFLESLTGDKSKDNELIGQFGVGFYSSFIVADKVTVRTRKAGQDKSQATKWVSDAQNGFTVEIITKEKRGTEVILHIKKEHLDLLEYHVLKGLVNKYSDCINTPIQMKKVEYDKDGKQTVKDEYETVNNTKAIWLRSKGEVTNEEYQEFYKYISHDFADALMWIHNKVEGNLEYNSLLYIPQNKPFDFWNRDKDYGLSLYVRRVFIMENKELLPPYLRFVKGVIDSADLPLNVSREILQHNKVIDKIKKAITTKILSELKKLASKDKEKYQKFWDSFGQVLKEGVSDDYSNKEKIAGLLRFATTQSGDSKQTVSLADYISRMKESQDTIYYITSDSYKAAANNPQLEAFKKKGIEVILMTDRIDEWMMSTLTEFDDKHMKSIIKGDIDLDKFETPENKEKFEKEAKDFEKVLKEIKEVLKDKVEDVRLSKRLTDSPSCVVVNDYGMSLHMQKMMEEAGQSFMPGMGMKPILELNAEHNLVQKLKNEADTEIFADLSELLLLQAMFVEGAKIEDPMAFVKLVNKYIR.

Residues 1 to 337 (MSEKKYTFET…SADLPLNVSR (337 aa)) form an a; substrate-binding region. Positions 338-554 (EILQHNKVID…DYGMSLHMQK (217 aa)) are b. A c region spans residues 555 to 628 (MMEEAGQSFM…FVKLVNKYIR (74 aa)).

The protein belongs to the heat shock protein 90 family. Homodimer.

It is found in the cytoplasm. Functionally, molecular chaperone. Has ATPase activity. The protein is Chaperone protein HtpG of Francisella tularensis subsp. holarctica (strain FTNF002-00 / FTA).